The chain runs to 97 residues: uncharacterized protein (97 aa).

This is an uncharacterized protein from Haemophilus influenzae (strain ATCC 51907 / DSM 11121 / KW20 / Rd).